Reading from the N-terminus, the 243-residue chain is CR(VI) reductase (243 aa).

This sequence belongs to the flavin oxidoreductase frp family. It depends on FMN as a cofactor.

This is CR(VI) reductase (chrR) from Pseudomonas sp. (strain G-1).